Here is a 179-residue protein sequence, read N- to C-terminus: Ribosome maturation factor RimM (179 aa).

One can recognise a PRC barrel domain in the interval 102–179 (DGEYYWYQLE…EMKVDWDADF (78 aa)).

This sequence belongs to the RimM family. As to quaternary structure, binds ribosomal protein uS19.

Its subcellular location is the cytoplasm. Its function is as follows. An accessory protein needed during the final step in the assembly of 30S ribosomal subunit, possibly for assembly of the head region. Essential for efficient processing of 16S rRNA. May be needed both before and after RbfA during the maturation of 16S rRNA. It has affinity for free ribosomal 30S subunits but not for 70S ribosomes. The sequence is that of Ribosome maturation factor RimM from Pseudomonas savastanoi pv. phaseolicola (strain 1448A / Race 6) (Pseudomonas syringae pv. phaseolicola (strain 1448A / Race 6)).